The primary structure comprises 212 residues: Imidazole glycerol phosphate synthase subunit HisH (212 aa).

The region spanning 3–208 (RIVIVDYGMG…GRMVCDLIST (206 aa)) is the Glutamine amidotransferase type-1 domain. Cys81 acts as the Nucleophile in catalysis. Residues His183 and Glu185 contribute to the active site.

As to quaternary structure, heterodimer of HisH and HisF.

It is found in the cytoplasm. The enzyme catalyses 5-[(5-phospho-1-deoxy-D-ribulos-1-ylimino)methylamino]-1-(5-phospho-beta-D-ribosyl)imidazole-4-carboxamide + L-glutamine = D-erythro-1-(imidazol-4-yl)glycerol 3-phosphate + 5-amino-1-(5-phospho-beta-D-ribosyl)imidazole-4-carboxamide + L-glutamate + H(+). The catalysed reaction is L-glutamine + H2O = L-glutamate + NH4(+). It participates in amino-acid biosynthesis; L-histidine biosynthesis; L-histidine from 5-phospho-alpha-D-ribose 1-diphosphate: step 5/9. In terms of biological role, IGPS catalyzes the conversion of PRFAR and glutamine to IGP, AICAR and glutamate. The HisH subunit catalyzes the hydrolysis of glutamine to glutamate and ammonia as part of the synthesis of IGP and AICAR. The resulting ammonia molecule is channeled to the active site of HisF. This is Imidazole glycerol phosphate synthase subunit HisH from Symbiobacterium thermophilum (strain DSM 24528 / JCM 14929 / IAM 14863 / T).